Consider the following 296-residue polypeptide: MQDRFIRSITQLPTPLADALIPLLHQGFAGHIDAQHLAELVKSSNMTESEVLLALLPIAAALAKPPISEFYVGAIAKGKSGDIYMGANLELPGEALFHSVHAEQSAISHAWLSGESQIVDMIVNASPCGHCRQFMNELVDGGQIKIHLPSQDSHLLSYYLPYAFGPKDLNVQSPLLVKQETEFALDSSDPMVIEALDHAGLSYAPYTQSYAAVVLETADGATYCGRYAENAAFNPSMLPMQMALSNLTRHNRDFAEIRRAVLVESSQGKISLVGAAMDALHAVAAIELEHIVVDPI.

CMP/dCMP-type deaminase domains follow at residues 47–167 (TESE…FGPK) and 186–296 (DSSD…VDPI). Residue 88 to 90 (NLE) coordinates substrate. His-101 is a binding site for Zn(2+). Residue Glu-103 is the Proton donor of the active site. Zn(2+)-binding residues include Cys-128 and Cys-131.

Belongs to the cytidine and deoxycytidylate deaminase family. Homodimer. It depends on Zn(2+) as a cofactor.

It catalyses the reaction cytidine + H2O + H(+) = uridine + NH4(+). The catalysed reaction is 2'-deoxycytidine + H2O + H(+) = 2'-deoxyuridine + NH4(+). Its function is as follows. This enzyme scavenges exogenous and endogenous cytidine and 2'-deoxycytidine for UMP synthesis. This is Cytidine deaminase from Shewanella oneidensis (strain ATCC 700550 / JCM 31522 / CIP 106686 / LMG 19005 / NCIMB 14063 / MR-1).